Here is a 581-residue protein sequence, read N- to C-terminus: Probable CDP-diacylglycerol--glycerol-3-phosphate 3-phosphatidyltransferase (581 aa).

The tract at residues 27 to 65 (RSATTTTTTTTKACGNGSSQSPPSTPLLSSKSSTITSNK) is disordered. Over residues 44–65 (SSQSPPSTPLLSSKSSTITSNK) the composition is skewed to low complexity. An ATP-binding site is contributed by 160–167 (ASLYLGTS). 2 consecutive PLD phosphodiesterase domains span residues 248–274 (TIGV…SKDY) and 487–520 (DKWT…GSRS). Residues His-253, Lys-255, and Asp-260 contribute to the active site.

It belongs to the CDP-alcohol phosphatidyltransferase class-II family.

It catalyses the reaction a CDP-1,2-diacyl-sn-glycerol + sn-glycerol 3-phosphate = a 1,2-diacyl-sn-glycero-3-phospho-(1'-sn-glycero-3'-phosphate) + CMP + H(+). It functions in the pathway phospholipid metabolism; phosphatidylglycerol biosynthesis; phosphatidylglycerol from CDP-diacylglycerol: step 1/2. In terms of biological role, functions in the biosynthesis of the anionic phospholipids phosphatidylglycerol and cardiolipin. In Dictyostelium discoideum (Social amoeba), this protein is Probable CDP-diacylglycerol--glycerol-3-phosphate 3-phosphatidyltransferase (pgs1).